The sequence spans 6269 residues: Nonribosomal peptide synthetase 1 (6269 aa).

The tract at residues 249–781 is adenylation 1; the sequence is ENDWSRVCSF…VSGKLDRKSI (533 aa). Residues 803 to 879 enclose the Carrier 1 domain; that stretch reads RAANSTEDQL…ELATRVKGVT (77 aa). The residue at position 840 (Ser840) is an O-(pantetheine 4'-phosphoryl)serine. The interval 894-1342 is epimerase 1; it reads LSPIQKLHFM…TLSDFPMLSL (449 aa). The interval 1373–1775 is condensation 1; it reads SRMQQGILLS…FLQSLENIIH (403 aa). The adenylation 2 stretch occupies residues 1725–2333; sequence HDPAEFPVYV…TGLLDRWFLR (609 aa). Residues 2364–2386 are disordered; the sequence is KPSPSQLLPSSTSATHRSSGTST. The segment covering 2367-2376 has biased composition (low complexity); it reads PSQLLPSSTS. Polar residues predominate over residues 2377-2386; sequence ATHRSSGTST. Positions 2597–2670 are condensation 2; sequence WRKYLADVES…TGSEEVCYGY (74 aa). Positions 2845 to 3368 are adenylation 3; the sequence is RCAHEIIEQQ…SGKLDRKKLR (524 aa). A Carrier 2 domain is found at 3392–3468; the sequence is ASDEGVEGTL…NMAKRCGMLQ (77 aa). Residue Ser3429 is modified to O-(pantetheine 4'-phosphoryl)serine. Residues 3512 to 3898 are condensation 3; it reads CSPVQEGLLT…GQFSFVLEQL (387 aa). An adenylation 4 region spans residues 3919–4454; that stretch reads DSKEVALWNK…VSGKLDRKKI (536 aa). The region spanning 4487–4563 is the Carrier 3 domain; the sequence is EDKSTAAKIL…ELIQAAEVET (77 aa). O-(pantetheine 4'-phosphoryl)serine is present on Ser4524. The epimerase 2 stretch occupies residues 4578 to 5024; the sequence is LSPIQNLYFK…DFPLLPITYD (447 aa). Residues 5052–5466 are condensation 4; the sequence is SSVQEGILLS…PSQLVSELDL (415 aa). Residues 5552–5628 enclose the Carrier 4 domain; that stretch reads SKLMEPEKRL…DMLAAISASN (77 aa). The residue at position 5589 (Ser5589) is an O-(pantetheine 4'-phosphoryl)serine. Residues 5628-5658 are disordered; it reads NSSSALEPDSPADSNNEKPAEPPRLVELERN. Residues 5642–5657 are compositionally biased toward basic and acidic residues; it reads NNEKPAEPPRLVELER. The condensation 5 stretch occupies residues 5720 to 6067; sequence FFFDGRGSLD…SSSDGKLGVS (348 aa). One can recognise a Carrier 5 domain in the interval 6139–6220; the sequence is SDILVHSDVV…GQMAVLTLHN (82 aa).

The protein belongs to the NRP synthetase family. In terms of processing, the thiolation domains are 4'-phosphopantetheinylated.

Functionally, nonribosomal peptide synthesis (NRPS) is a key mechanism responsible for the biosynthesis of bioactive metabolites which are potentially contributing to organismal virulence. Contributes to improved fungal tolerance against oxidative stress, during the infection process. This chain is Nonribosomal peptide synthetase 1 (NRPS1), found in Aspergillus fumigatus (strain ATCC MYA-4609 / CBS 101355 / FGSC A1100 / Af293) (Neosartorya fumigata).